We begin with the raw amino-acid sequence, 506 residues long: Heat stress transcription factor A-1 (506 aa).

The stretch at 157–207 forms a coiled coil; that stretch reads MEEEIEMLKRDKNVLMQELVRLRQQQQTTDHQLQTLGKRLQGMEQRQQQMM. Positions 164–214 are hydrophobic repeat HR-A/B; sequence LKRDKNVLMQELVRLRQQQQTTDHQLQTLGKRLQGMEQRQQQMMSFLAKAM. A disordered region spans residues 231 to 254; sequence RRRIVASNKKRRLPKQDGSLDSES. Positions 232-243 are enriched in basic residues; sequence RRIVASNKKRRL. Residues 239 to 242 carry the Nuclear localization signal motif; sequence KKRR. Positions 449-456 match the AHA motif; the sequence is DSFWEQFL.

Belongs to the HSF family. Class A subfamily. In terms of assembly, homotrimer. Post-translationally, exhibits temperature-dependent phosphorylation.

The protein localises to the nucleus. Its function is as follows. Transcriptional regulator that specifically binds DNA of heat shock promoter elements (HSE). The protein is Heat stress transcription factor A-1 (HSFA1) of Oryza sativa subsp. japonica (Rice).